A 136-amino-acid chain; its full sequence is ATP synthase epsilon chain, plastid (136 aa).

This sequence belongs to the ATPase epsilon chain family. In terms of assembly, F-type ATPases have 2 components, CF(1) - the catalytic core - and CF(0) - the membrane proton channel. CF(1) has five subunits: alpha(3), beta(3), gamma(1), delta(1), epsilon(1). CF(0) has three main subunits: a, b and c.

Its subcellular location is the plastid thylakoid membrane. Produces ATP from ADP in the presence of a proton gradient across the membrane. This chain is ATP synthase epsilon chain, plastid, found in Cuscuta reflexa (Southern Asian dodder).